The sequence spans 145 residues: MLTAEEKAAVTAFWGKVKVDEVGGEALGRLLVVYPWTQRFFESFGDLSTADAVMNNPKVKAHGKKVLDSFSNGMKHLDDLKGTFAALSELHCDKLHVDPENFKLLGNVLVVVLARNFGKEFTPVLQADFQKVVAGVANALAHRYH.

The Globin domain maps to 1 to 145 (MLTAEEKAAV…VANALAHRYH (145 aa)). The residue at position 11 (Thr-11) is a Phosphothreonine. Ser-43 bears the Phosphoserine mark. The residue at position 58 (Lys-58) is an N6-acetyllysine. Residue His-62 coordinates heme b. Residue Lys-81 is modified to N6-acetyllysine. His-91 is a heme b binding site. An S-nitrosocysteine modification is found at Cys-92.

This sequence belongs to the globin family. In terms of assembly, heterotetramer of two alpha chains and two beta chains. As to expression, red blood cells.

In terms of biological role, involved in oxygen transport from the lung to the various peripheral tissues. Its function is as follows. Functions as an endogenous inhibitor of enkephalin-degrading enzymes such as DPP3, and may thereby play a role as a regulator of pain and inflammation. The polypeptide is Hemoglobin subunit beta (HBB) (Bos taurus (Bovine)).